A 639-amino-acid polypeptide reads, in one-letter code: MYQLTLPDKSVKKVALGSTYRDFIEKELPFLKNKALAVRLNGKDIQDLSRVVETDANIEVLTYTEKAGWETFQHSAAHLLGMAVQNLYKNANLTVGPVIENGPGFFYYDIDFQGTIITPEDFPKIEAEMERIVKADYTVWRKVVPKKEAIETFQKLGEKYKIEIIGGILSEEVSIYGMGEWFDLCRGPHVSNSGILKSFKLTAISGAYWKADKDNAMLTRIYGVAFPSKKELDQYLFQIEEAKKRDHRKIGKELDLFSFQKEGPGFPFWHPKGTILWNSLADYLRAECNKRGYQEIKTPAVLSSELWKKSGHWDNFHENMYFTDIDEEDYALKPMNCPGCSLIYKHHLHSYRELPLRFAEFGSVHRHELHGVLHGLFRVRAFTQDDSHIYAPLEHLESEVTDIIDFTFTVYKKFGFSEFKTFIATRPEKSQGRDEDWEFATNTLKQSLEKKGIPYGIKEGEGAFYGPKIEFNIKDSIGRLWQCGTIQVDFSMPERFELDYTDSDGQKKRPVMIHRAIYGSLERFIGILIEHYEGKFPLWISPNQIRILTITEKVAEYAKDVYCELVDAGFRVELDTRNEKIGAKIRDSILKKANYLLILGEKEMESGTLAVRKRGQEDTKTLTRSGFISNLQDEIKSAG.

The TGS domain occupies 1–62 (MYQLTLPDKS…ETDANIEVLT (62 aa)). Residues 246 to 537 (DHRKIGKELD…LIEHYEGKFP (292 aa)) form a catalytic region. 3 residues coordinate Zn(2+): C337, H388, and H514.

It belongs to the class-II aminoacyl-tRNA synthetase family. Homodimer. Zn(2+) is required as a cofactor.

The protein localises to the cytoplasm. It carries out the reaction tRNA(Thr) + L-threonine + ATP = L-threonyl-tRNA(Thr) + AMP + diphosphate + H(+). Its function is as follows. Catalyzes the attachment of threonine to tRNA(Thr) in a two-step reaction: L-threonine is first activated by ATP to form Thr-AMP and then transferred to the acceptor end of tRNA(Thr). Also edits incorrectly charged L-seryl-tRNA(Thr). This is Threonine--tRNA ligase from Leptospira borgpetersenii serovar Hardjo-bovis (strain JB197).